Here is a 450-residue protein sequence, read N- to C-terminus: UDP-N-acetylmuramoylalanine--D-glutamate ligase (450 aa).

119–125 is an ATP binding site; sequence GSNGKTT.

Belongs to the MurCDEF family.

Its subcellular location is the cytoplasm. The enzyme catalyses UDP-N-acetyl-alpha-D-muramoyl-L-alanine + D-glutamate + ATP = UDP-N-acetyl-alpha-D-muramoyl-L-alanyl-D-glutamate + ADP + phosphate + H(+). It functions in the pathway cell wall biogenesis; peptidoglycan biosynthesis. Its function is as follows. Cell wall formation. Catalyzes the addition of glutamate to the nucleotide precursor UDP-N-acetylmuramoyl-L-alanine (UMA). This Streptococcus pneumoniae (strain CGSP14) protein is UDP-N-acetylmuramoylalanine--D-glutamate ligase.